Here is a 229-residue protein sequence, read N- to C-terminus: GTP-binding protein Di-Ras3 (229 aa).

GTP contacts are provided by residues 44–51 (GTAGVGKS), 63–69 (RHEYLPT), 91–95 (DSKSG), 152–155 (NKSD), and 182–183 (AK). Residues 66–74 (YLPTIENTY) carry the Effector region motif. Cysteine methyl ester is present on C226. Residue C226 is the site of S-geranylgeranyl cysteine attachment. Residues 227 to 229 (IIM) constitute a propeptide, removed in mature form.

It belongs to the small GTPase superfamily. Di-Ras family. In terms of tissue distribution, expressed in normal ovarian and breast epithelial cells but not in ovarian and breast cancers.

It is found in the cell membrane. In Homo sapiens (Human), this protein is GTP-binding protein Di-Ras3 (DIRAS3).